Consider the following 505-residue polypeptide: ATP synthase subunit alpha (505 aa).

Residue 171 to 178 (GDRQTGKT) participates in ATP binding.

This sequence belongs to the ATPase alpha/beta chains family. As to quaternary structure, F-type ATPases have 2 components, CF(1) - the catalytic core - and CF(0) - the membrane proton channel. CF(1) has five subunits: alpha(3), beta(3), gamma(1), delta(1), epsilon(1). CF(0) has three main subunits: a(1), b(2) and c(9-12). The alpha and beta chains form an alternating ring which encloses part of the gamma chain. CF(1) is attached to CF(0) by a central stalk formed by the gamma and epsilon chains, while a peripheral stalk is formed by the delta and b chains.

It is found in the cell inner membrane. The catalysed reaction is ATP + H2O + 4 H(+)(in) = ADP + phosphate + 5 H(+)(out). In terms of biological role, produces ATP from ADP in the presence of a proton gradient across the membrane. The alpha chain is a regulatory subunit. This chain is ATP synthase subunit alpha, found in Campylobacter hominis (strain ATCC BAA-381 / DSM 21671 / CCUG 45161 / LMG 19568 / NCTC 13146 / CH001A).